Reading from the N-terminus, the 317-residue chain is Sulfate adenylyltransferase subunit 2 (317 aa).

2 disordered regions span residues 1 to 21 and 298 to 317; these read MPDSRPDTELSNPQSAKAPLD and RAIDRDQSGSMEKKKREGYF.

Belongs to the PAPS reductase family. CysD subfamily. Heterodimer composed of CysD, the smaller subunit, and CysN.

It carries out the reaction sulfate + ATP + H(+) = adenosine 5'-phosphosulfate + diphosphate. The protein operates within sulfur metabolism; hydrogen sulfide biosynthesis; sulfite from sulfate: step 1/3. Its function is as follows. With CysN forms the ATP sulfurylase (ATPS) that catalyzes the adenylation of sulfate producing adenosine 5'-phosphosulfate (APS) and diphosphate, the first enzymatic step in sulfur assimilation pathway. APS synthesis involves the formation of a high-energy phosphoric-sulfuric acid anhydride bond driven by GTP hydrolysis by CysN coupled to ATP hydrolysis by CysD. In Rhizobium etli (strain CIAT 652), this protein is Sulfate adenylyltransferase subunit 2.